We begin with the raw amino-acid sequence, 150 residues long: Large ribosomal subunit protein uL13 (150 aa).

The interval 130 to 150 (EHPHSAQNPQVLSITTNELVK) is disordered. A compositionally biased stretch (polar residues) spans 134–150 (SAQNPQVLSITTNELVK).

This sequence belongs to the universal ribosomal protein uL13 family. In terms of assembly, part of the 50S ribosomal subunit.

Functionally, this protein is one of the early assembly proteins of the 50S ribosomal subunit, although it is not seen to bind rRNA by itself. It is important during the early stages of 50S assembly. The chain is Large ribosomal subunit protein uL13 from Prochlorococcus marinus (strain SARG / CCMP1375 / SS120).